The primary structure comprises 241 residues: Ras-like protein 1 (241 aa).

GTP is bound by residues Gly-17–Ala-22, Val-33–Thr-39, Ala-63–Gly-64, Asn-138–Asp-141, and Ser-168–Lys-170. The short motif at Tyr-36–Tyr-44 is the Effector region element. Positions Arg-190–Leu-241 are disordered. Positions Gln-191–Lys-205 are enriched in polar residues. Over residues Asp-219 to Lys-230 the composition is skewed to basic and acidic residues. Cys-238 carries the cysteine methyl ester modification. The S-farnesyl cysteine moiety is linked to residue Cys-238. Residues Val-239–Leu-241 constitute a propeptide, removed in mature form.

This sequence belongs to the small GTPase superfamily. Ras family. As to quaternary structure, interacts with farnesyltransferase beta subunit RAM1.

It localises to the cell membrane. With respect to regulation, alternates between an inactive form bound to GDP and an active form bound to GTP. Activated by a guanine nucleotide-exchange factor (GEF) and inactivated by a GTPase-activating protein (GAP). Modulates the activity of the adenylate cyclase catalytic subunit and therefore affects the biosynthesis of cyclic-AMP. Plays a role in both surface attachment and surface recognition of appressoria, a highly specialized infection structure for plant penetration. Regulates appressorium formation by coordinated regulation of cAMP signaling and Pmk1 MAPK pathways. The polypeptide is Ras-like protein 1 (Pyricularia oryzae (strain 70-15 / ATCC MYA-4617 / FGSC 8958) (Rice blast fungus)).